A 355-amino-acid polypeptide reads, in one-letter code: Putative inositol monophosphatase 3 (355 aa).

Residues 16–36 form a helical membrane-spanning segment; the sequence is LPATIVAILLTFVLVYFLNFH. 5 residues coordinate Mg(2+): Glu127, Asp167, Leu169, Asp170, and Asp292. Glu127 serves as a coordination point for substrate. Substrate contacts are provided by residues 169 to 172 and Asp292; that span reads LDAT.

Belongs to the inositol monophosphatase superfamily. It depends on Mg(2+) as a cofactor.

It localises to the membrane. It carries out the reaction a myo-inositol phosphate + H2O = myo-inositol + phosphate. The protein operates within polyol metabolism; myo-inositol biosynthesis; myo-inositol from D-glucose 6-phosphate: step 2/2. The chain is Putative inositol monophosphatase 3 from Drosophila melanogaster (Fruit fly).